The chain runs to 474 residues: Calcium/calmodulin-dependent protein kinase type IV (474 aa).

A phosphoserine; by autocatalysis mark is found at S11 and S12. Positions F42–V296 constitute a Protein kinase domain. Residues L48 to V56 and K71 each bind ATP. T53 carries an O-linked (GlcNAc) threonine glycan. O-linked (GlcNAc) serine glycosylation occurs at S54. The O-linked (GlcNAc) serine glycan is linked to S133. D160 functions as the Proton acceptor in the catalytic mechanism. S185 carries an O-linked (GlcNAc) serine glycan. T196 carries the post-translational modification Phosphothreonine; by CaMKK1 and CaMKK2. Residues T297–G336 are autoinhibitory domain. The PP2A-binding stretch occupies residues N302–R319. The calmodulin-binding stretch occupies residues A318–S337. Position 332 is a phosphoserine; by autocatalysis (S332). A disordered region spans residues G336 to Y474. Residue S337 is modified to Phosphoserine. O-linked (GlcNAc) serine glycans are attached at residues S340, S341, and S352. Residues H342–Q356 are compositionally biased toward polar residues. The span at D360 to S392 shows a compositional bias: basic and acidic residues. Residues E393–E413 show a composition bias toward acidic residues. The span at Q431 to E454 shows a compositional bias: basic and acidic residues. 2 positions are modified to phosphoserine: S437 and S443.

The protein belongs to the protein kinase superfamily. CAMK Ser/Thr protein kinase family. CaMK subfamily. Monomer. Interacts with protein phosphatase 2A (PPP2CA/PPP2CB); the interaction is mutually exclusive with binding to Ca(2+)/calmodulin. Phosphorylated by CaMKK1 and CaMKK2 on Thr-196. Dephosphorylated by protein phosphatase 2A. Autophosphorylated on Ser-11 and Ser-12. Post-translationally, glycosylation at Ser-185 modulates the phosphorylation of CaMK4 at Thr-196 and negatively regulates its activity toward CREB1 in basal conditions and during early inomycin stimulation. In terms of processing, the N-terminus of calspermin is blocked. As to expression, isoform 1 is expressed in brain and isoform 2 is testis specific.

It is found in the cytoplasm. Its subcellular location is the nucleus. The enzyme catalyses L-seryl-[protein] + ATP = O-phospho-L-seryl-[protein] + ADP + H(+). It catalyses the reaction L-threonyl-[protein] + ATP = O-phospho-L-threonyl-[protein] + ADP + H(+). Its activity is regulated as follows. Activated by Ca(2+)/calmodulin. Binding of calmodulin results in conformational change that relieves intrasteric autoinhibition and allows phosphorylation of Thr-196 within the activation loop by CaMKK1 or CaMKK2. Phosphorylation of Thr-196 results in a 10-20-fold increase in total activity to generate Ca(2+)/calmodulin-independent activity. Autophosphorylation of the N-terminus Ser-11 and Ser-12 is required for full activation. Inactivated by protein phosphatase 2A (PPP2CA/PPP2CB) which dephosphorylates Thr-196, thereby terminating autonomous activity and helping to maintain the enzyme in its autoinhibited state. In terms of biological role, calcium/calmodulin-dependent protein kinase that operates in the calcium-triggered CaMKK-CaMK4 signaling cascade and regulates, mainly by phosphorylation, the activity of several transcription activators, such as CREB1, MEF2D, JUN and RORA, which play pivotal roles in immune response, inflammation, and memory consolidation. In the thymus, regulates the CD4(+)/CD8(+) double positive thymocytes selection threshold during T-cell ontogeny. In CD4 memory T-cells, is required to link T-cell antigen receptor (TCR) signaling to the production of IL2, IFNG and IL4 (through the regulation of CREB and MEF2). Regulates the differentiation and survival phases of osteoclasts and dendritic cells (DCs). Mediates DCs survival by linking TLR4 and the regulation of temporal expression of BCL2. Phosphorylates the transcription activator CREB1 on 'Ser-133' in hippocampal neuron nuclei and contribute to memory consolidation and long term potentiation (LTP) in the hippocampus. Can activate the MAP kinases MAPK1/ERK2, MAPK8/JNK1 and MAPK14/p38 and stimulate transcription through the phosphorylation of ELK1 and ATF2. Can also phosphorylate in vitro CREBBP, PRM2, MEF2A and STMN1/OP18. Heat-stable, acidic, calmodulin-binding protein. This Rattus norvegicus (Rat) protein is Calcium/calmodulin-dependent protein kinase type IV (Camk4).